Consider the following 247-residue polypeptide: 2,3-bisphosphoglycerate-dependent phosphoglycerate mutase (247 aa).

Substrate contacts are provided by residues 8 to 15, 21 to 22, arginine 60, 87 to 90, lysine 98, 114 to 115, and 183 to 184; these read RHGESTWN, TG, ERHY, RR, and GN. The Tele-phosphohistidine intermediate role is filled by histidine 9. Glutamate 87 serves as the catalytic Proton donor/acceptor.

It belongs to the phosphoglycerate mutase family. BPG-dependent PGAM subfamily. As to quaternary structure, homodimer.

It carries out the reaction (2R)-2-phosphoglycerate = (2R)-3-phosphoglycerate. It functions in the pathway carbohydrate degradation; glycolysis; pyruvate from D-glyceraldehyde 3-phosphate: step 3/5. In terms of biological role, catalyzes the interconversion of 2-phosphoglycerate and 3-phosphoglycerate. This Methylibium petroleiphilum (strain ATCC BAA-1232 / LMG 22953 / PM1) protein is 2,3-bisphosphoglycerate-dependent phosphoglycerate mutase.